The chain runs to 263 residues: 3-deoxy-manno-octulosonate cytidylyltransferase (263 aa).

The protein belongs to the KdsB family.

It is found in the cytoplasm. The catalysed reaction is 3-deoxy-alpha-D-manno-oct-2-ulosonate + CTP = CMP-3-deoxy-beta-D-manno-octulosonate + diphosphate. It participates in nucleotide-sugar biosynthesis; CMP-3-deoxy-D-manno-octulosonate biosynthesis; CMP-3-deoxy-D-manno-octulosonate from 3-deoxy-D-manno-octulosonate and CTP: step 1/1. Its pathway is bacterial outer membrane biogenesis; lipopolysaccharide biosynthesis. Functionally, activates KDO (a required 8-carbon sugar) for incorporation into bacterial lipopolysaccharide in Gram-negative bacteria. The sequence is that of 3-deoxy-manno-octulosonate cytidylyltransferase from Burkholderia cenocepacia (strain HI2424).